The chain runs to 244 residues: Chaperone protein FimB/FhaD (244 aa).

Positions 1–24 are cleaved as a signal peptide; sequence MARWRRRLGVAALGAAMLASLAPA.

This sequence belongs to the periplasmic pilus chaperone family.

It localises to the periplasm. In terms of biological role, required for the biogenesis of the filamentous hemagglutinin and the fimbria. This Bordetella pertussis (strain Tohama I / ATCC BAA-589 / NCTC 13251) protein is Chaperone protein FimB/FhaD (fimB).